The primary structure comprises 160 residues: 2-C-methyl-D-erythritol 2,4-cyclodiphosphate synthase (160 aa).

Residues aspartate 10 and histidine 12 each contribute to the a divalent metal cation site. 4-CDP-2-C-methyl-D-erythritol 2-phosphate is bound by residues 10–12 (DVH) and 36–37 (HS). Histidine 44 contributes to the a divalent metal cation binding site. 4-CDP-2-C-methyl-D-erythritol 2-phosphate is bound by residues 58-60 (DIG), 63-67 (FPDTD), 102-108 (AQAPKML), 134-137 (TTTE), phenylalanine 141, and arginine 144.

This sequence belongs to the IspF family. Homotrimer. The cofactor is a divalent metal cation.

It catalyses the reaction 4-CDP-2-C-methyl-D-erythritol 2-phosphate = 2-C-methyl-D-erythritol 2,4-cyclic diphosphate + CMP. Its pathway is isoprenoid biosynthesis; isopentenyl diphosphate biosynthesis via DXP pathway; isopentenyl diphosphate from 1-deoxy-D-xylulose 5-phosphate: step 4/6. Involved in the biosynthesis of isopentenyl diphosphate (IPP) and dimethylallyl diphosphate (DMAPP), two major building blocks of isoprenoid compounds. Catalyzes the conversion of 4-diphosphocytidyl-2-C-methyl-D-erythritol 2-phosphate (CDP-ME2P) to 2-C-methyl-D-erythritol 2,4-cyclodiphosphate (ME-CPP) with a corresponding release of cytidine 5-monophosphate (CMP). In Shewanella amazonensis (strain ATCC BAA-1098 / SB2B), this protein is 2-C-methyl-D-erythritol 2,4-cyclodiphosphate synthase.